We begin with the raw amino-acid sequence, 414 residues long: Lactosylceramide alpha-2,3-sialyltransferase (414 aa).

Topologically, residues 1–65 are cytoplasmic; the sequence is MHTEAVGGAA…MRRPSLLIKD (65 aa). A helical; Signal-anchor for type II membrane protein transmembrane segment spans residues 66–86; it reads ICKCTLVAFGVWLLYILILNY. Topologically, residues 87 to 414 are lumenal; sequence TAEECDMKRM…VVEDLSGGIH (328 aa). A disulfide bond links cysteine 194 and cysteine 352. N-linked (GlcNAc...) asparagine glycans are attached at residues asparagine 235, asparagine 279, and asparagine 389.

This sequence belongs to the glycosyltransferase 29 family. In terms of tissue distribution, mainly expressed in brain, and then testis, heart and liver, almost all tissues showed some levels of the gene expression.

The protein resides in the golgi apparatus membrane. The enzyme catalyses a beta-D-Gal-(1-&gt;4)-beta-D-Glc-(1&lt;-&gt;1)-Cer(d18:1(4E)) + CMP-N-acetyl-beta-neuraminate = a ganglioside GM3 (d18:1(4E)) + CMP + H(+). It carries out the reaction ganglioside GA2 (d18:1(4E)/18:0) + CMP-N-acetyl-beta-neuraminate = ganglioside GM2 (d18:1(4E)/18:0) + CMP + H(+). The catalysed reaction is a beta-D-Gal-(1&lt;-&gt;1')-ceramide + CMP-N-acetyl-beta-neuraminate = N-acetyl-alpha-neuraminosyl-(2-&gt;3)-beta-D-galactosyl-(1&lt;-&gt;1')-ceramide + CMP + H(+). It catalyses the reaction ganglioside GA1 (d18:1(4E)/18:0) + CMP-N-acetyl-beta-neuraminate = ganglioside GM1 (d18:1(4E)/18:0) + CMP + H(+). In terms of biological role, (Microbial infection) Gangliosides GD1b and GT1b (derived from GM3) may serve as receptors for some C.botulinum neurotoxins (minimally types BoNT/A, B, C). Its function is as follows. Transfers the sialyl group (N-acetyl-alpha-neuraminyl or NeuAc) from CMP-NeuAc to the non-reducing terminal galactose (Gal) of glycosphingolipids forming gangliosides (important molecules involved in the regulation of multiple cellular processes, including cell proliferation and differentiation, apoptosis, embryogenesis, development, and oncogenesis). Mainly involved in the biosynthesis of ganglioside GM3 but can also use different glycolipids as substrate acceptors such as D-galactosylceramide (GalCer), asialo-GM2 (GA2) and asialo-GM1 (GA1), although less preferentially than beta-D-Gal-(1-&gt;4)-beta-D-Glc-(1&lt;-&gt;1)-Cer (LacCer). The sequence is that of Lactosylceramide alpha-2,3-sialyltransferase (St3gal5) from Mus musculus (Mouse).